The sequence spans 180 residues: MASTVSAYKEKMKELSLLSLICSCFHTQPHPNTIYQYGDMEVKQLDKRASGQSFEVILKSPSDLSPESPILSSPPKKKDLSLEELQRRLEAAEERRKTQEAQVLKQLAEKREHEREVLHKALEENNNFSRLAEEKLNYKMELSREIREAHLAALRERLREKELHAAEVRRNKEQREEISG.

Residues 38–180 (GDMEVKQLDK…NKEQREEISG (143 aa)) form the SLD domain. The segment covering 60–74 (SPSDLSPESPILSSP) has biased composition (low complexity). The interval 60–82 (SPSDLSPESPILSSPPKKKDLSL) is disordered. Residues 75-179 (PKKKDLSLEE…RNKEQREEIS (105 aa)) adopt a coiled-coil conformation.

The protein belongs to the stathmin family.

This chain is Stathmin-3 (STMN3), found in Gallus gallus (Chicken).